Consider the following 209-residue polypeptide: Probable phosphatase C1687.21 (209 aa).

The active-site Tele-phosphohistidine intermediate is H8. The active-site Proton donor/acceptor is E82.

The protein belongs to the phosphoglycerate mutase family. BPG-dependent PGAM subfamily.

It is found in the cytoplasm. Its subcellular location is the nucleus. This chain is Probable phosphatase C1687.21, found in Schizosaccharomyces pombe (strain 972 / ATCC 24843) (Fission yeast).